A 1294-amino-acid chain; its full sequence is MEAEIVNVRPQLGFIQRMVPALLPVLLVSVGYIDPGKWVANIEGGARFGYDLVAITLLFNFAAILCQYVAARISVVTGKHLAQICNEEYDKWTCMFLGIQAEFSAILLDLTMVVGVAHALNLLFGVELSTGVFLAAMDAFLFPVFASFLENGMANTVSIYSAGLVLLLYVSGVLLSQSEIPLSMNGVLTRLNGESAFALMGLLGASIVPHNFYIHSYFAGESTSSSDVDKSSLCQDHLFAIFGVFSGLSLVNYVLMNAAANVFHSTGLVVLTFHDALSLMEQVFMSPLIPVVFLMLLFFSSQITALAWAFGGEVVLHDFLKIEIPAWLHRATIRILAVAPALYCVWTSGADGIYQLLIFTQVLVAMMLPCSVIPLFRIASSRQIMGVHKIPQVGEFLALTTFLGFLGLNVVFVVEMVFGSSDWAGGLRWNTVMGTSIQYTTLLVSSCASLCLILWLAATPLKSASNRAEAQIWNMDAQNALSYPSVQEEEIERTETRRNEDESIVRLESRVKDQLDTTSVTSSVYDLPENILMTDQEIRSSPPEERELDVKYSTSQVSSLKEDSDVKEQSVLQSTVVNEVSDKDLIVETKMAKIEPMSPVEKIVSMENNSKFIEKDVEGVSWETEEATKAAPTSNFTVGSDGPPSFRSLSGEGGSGTGSLSRLQGLGRAARRHLSAILDEFWGHLYDFHGQLVAEARAKKLDQLFGTDQKSASSMKADSFGKDISSGYCMSPTAKGMDSQMTSSLYDSLKQQRTPGSIDSLYGLQRGSSPSPLVNRMQMLGAYGNTTNNNNAYELSERRYSSLRAPSSSEGWEHQQPATVHGYQMKSYVDNLAKERLEALQSRGEIPTSRSMALGTLSYTQQLALALKQKSQNGLTPGPAPGFENFAGSRSISRQSERSYYGVPSSGNTDTVGAAVANEKKYSSMPDISGLSMSARNMHLPNNKSGYWDPSSGGGGYGASYGRLSNESSLYSNLGSRVGVPSTYDDISQSRGGYRDAYSLPQSATTGTGSLWSRQPFEQFGVAERNGAVGEELRNRSNPINIDNNASSNVDAEAKLLQSFRHCILKLIKLEGSEWLFGQSDGVDEELIDRVAAREKFIYEAEAREINQVGHMGEPLISSVPNCGDGCVWRADLIVSFGVWCIHRVLDLSLMESRPELWGKYTYVLNRLQGVIDPAFSKLRTPMTPCFCLQIPASHQRASPTSANGMLPPAAKPAKGKCTTAVTLLDLIKDVEMAISCRKGRTGTAAGDVAFPKGKENLASVLKRYKRRLSNKPVGMNQDGPGSRKNVTAYGSLG.

The Cytoplasmic portion of the chain corresponds to Met-1 to Leu-12. A helical membrane pass occupies residues Gly-13–Ile-33. The Extracellular portion of the chain corresponds to Asp-34 to Tyr-50. Residues Asp-51–Ala-71 traverse the membrane as a helical segment. Topologically, residues Arg-72–Ala-105 are cytoplasmic. A helical transmembrane segment spans residues Ile-106–Val-126. Position 127 (Glu-127) is a topological domain, extracellular. Residues Leu-128 to Phe-148 traverse the membrane as a helical segment. The Cytoplasmic segment spans residues Leu-149–Asn-155. The chain crosses the membrane as a helical span at residues Thr-156–Ser-176. Residues Gln-177 to Glu-194 lie on the Extracellular side of the membrane. A helical membrane pass occupies residues Ser-195–His-215. The Cytoplasmic segment spans residues Ser-216 to His-237. Residues Leu-238–Ala-258 form a helical membrane-spanning segment. Residues Ala-259–Pro-287 lie on the Extracellular side of the membrane. Residues Leu-288–Trp-308 traverse the membrane as a helical segment. Residues Ala-309–Arg-334 are Cytoplasmic-facing. The next 2 membrane-spanning stretches (helical) occupy residues Ile-335–Gln-355 and Leu-356–Phe-376. Residues Arg-377–Leu-397 are Cytoplasmic-facing. Residues Ala-398–Phe-418 form a helical membrane-spanning segment. The Extracellular portion of the chain corresponds to Gly-419–Thr-440. A helical membrane pass occupies residues Thr-441–Leu-461. At Lys-462–Gly-1294 the chain is on the cytoplasmic side. Disordered regions lie at residues Thr-534 to Lys-561 and Glu-623 to Arg-662. The segment covering Gln-536–Val-550 has biased composition (basic and acidic residues). Residues Ser-645, Ser-659, and Ser-757 each carry the phosphoserine modification. Phosphothreonine is present on Thr-819. Ser-924 is modified (phosphoserine). The short motif at Leu-1262 to Leu-1269 is the Nuclear localization signal element. A disordered region spans residues Leu-1269–Gly-1294. Residue Ser-1283 is modified to Phosphoserine.

The protein belongs to the NRAMP (TC 2.A.55) family. As to quaternary structure, interacts (via NLS) with ETR1. Interacts (via C-terminus) with EER5 and the COP9 signalosome subunits CSN3, CSN6A and CSN6B. Interacts with ETP1 and ETP2. Interacts with CTR1. Interacts with all members of the ethylene receptor family, including ETR1, ETR2, ERS1, ERS2 and EIN4. Binds to MRF3/ECIP1. In terms of assembly, interacts with several P-body components, such as XRN4/EIN5, PAB2, PAB4 and PAB8. Binds to ENAP1 in the presence of ethylene; this reaction facilitates its association with histone. In terms of processing, phosphorylated by CTR1 on at least 4 sites. Phosphorylation of Ser-645 and Ser-924 is involved in repressing EIN2 signaling. Loss of phosphorylation results in nuclear localization of the C-terminus of EIN2. Localized to the guard cells after methyl jasmonate treatment.

The protein localises to the endoplasmic reticulum membrane. Its subcellular location is the nucleus. It localises to the cytoplasm. In terms of biological role, central factor in signaling pathways regulated by ethylene (ET) and involved in various processes including development, plant defense, senescence, nucleotide sugar flux, and tropisms. Necessary for ethylene-mediated gene regulation, and for the induction of some genes by ozone. Acts downstream of ET receptors, and upstream of ethylene regulated transcription factors. Required for cytokinin-mediated processes. Seems to be implicated in cross-talk between ET, jasmonate and other pathways. Probably not involved in iron uptake. Has a short half-life and undergoes rapid proteasome-mediated turnover in the absence of ethylene. Required for ethylene-induced EIN3 stabilization via proteasomal degradation of EBF1/EBF2 proteins. Regulates the leaf senescence induced by methyl jasmonate, ethylene and abscisic acid. Required during salt stress to confer resistance. Its function is as follows. Trafficking signal inducing ethylene response. The nuclear localization is both necessary and sufficient to activate EIN3-mediated transcription and ethylene responses. Involved in ethylene (ET)-mediated signaling pathways by triggering histone acetylation of H3K14 and H3K23 in an ENAP1-dependent manner, thus influencing the expression of ethylene-responsive genes. Necessary and sufficient for 3'-UTR-mediated translational repression of EBF1 and EBF2 mRNAs. Ethylene induces EIN2-CEND to associate with 3' UTRs in cytoplasmic foci and target EBF1/2 mRNAs to cytoplasmic processing-body (P-body). MPK6 regulates the cleavage and nuclear translocation of EIN2-CEND under methyl jasmonate treatment. Required for EIN3 accumulation. The chain is Ethylene-insensitive protein 2 from Arabidopsis thaliana (Mouse-ear cress).